The sequence spans 482 residues: Hydroxymethylglutaryl-CoA synthase A (482 aa).

Glu-85 (proton donor/acceptor) is an active-site residue. Cys-119 (acyl-thioester intermediate) is an active-site residue. 7 residues coordinate (3S)-3-hydroxy-3-methylglutaryl-CoA: Cys-119, Thr-161, Ser-211, His-249, Lys-258, Asn-325, and Ser-358. His-249 acts as the Proton donor/acceptor in catalysis.

This sequence belongs to the thiolase-like superfamily. HMG-CoA synthase family.

The catalysed reaction is acetoacetyl-CoA + acetyl-CoA + H2O = (3S)-3-hydroxy-3-methylglutaryl-CoA + CoA + H(+). Its pathway is metabolic intermediate biosynthesis; (R)-mevalonate biosynthesis; (R)-mevalonate from acetyl-CoA: step 2/3. In terms of biological role, condenses acetyl-CoA with acetoacetyl-CoA to form HMG-CoA, which is the substrate for HMG-CoA reductase. The sequence is that of Hydroxymethylglutaryl-CoA synthase A (hgsA) from Dictyostelium discoideum (Social amoeba).